Reading from the N-terminus, the 531-residue chain is Tyrosine/DOPA decarboxylase 2 (531 aa).

At Lys319 the chain carries N6-(pyridoxal phosphate)lysine.

Belongs to the group II decarboxylase family. In terms of assembly, homodimer. Pyridoxal 5'-phosphate is required as a cofactor. Predominantly expressed in the roots and stems, while a lower level expression is seen in the sepals and carpels of fully expanded flowers.

The catalysed reaction is L-tyrosine + H(+) = tyramine + CO2. The enzyme catalyses L-dopa + H(+) = dopamine + CO2. It carries out the reaction 5-hydroxy-L-tryptophan + H(+) = serotonin + CO2. In terms of biological role, marginally higher substrate specificity for L-DOPA over L-tyrosine. The protein is Tyrosine/DOPA decarboxylase 2 (TYDC2) of Papaver somniferum (Opium poppy).